The following is a 162-amino-acid chain: Putative pre-16S rRNA nuclease (162 aa).

The protein belongs to the YqgF nuclease family.

It is found in the cytoplasm. Could be a nuclease involved in processing of the 5'-end of pre-16S rRNA. This Brucella melitensis biotype 1 (strain ATCC 23456 / CCUG 17765 / NCTC 10094 / 16M) protein is Putative pre-16S rRNA nuclease.